The following is a 392-amino-acid chain: 23S rRNA (uracil(747)-C(5))-methyltransferase RlmC (392 aa).

Positions 4, 12, 15, and 93 each coordinate [4Fe-4S] cluster. Residues glutamine 218, phenylalanine 247, glutamate 275, and asparagine 321 each contribute to the S-adenosyl-L-methionine site. Cysteine 348 functions as the Nucleophile in the catalytic mechanism.

Belongs to the class I-like SAM-binding methyltransferase superfamily. RNA M5U methyltransferase family. RlmC subfamily.

It catalyses the reaction uridine(747) in 23S rRNA + S-adenosyl-L-methionine = 5-methyluridine(747) in 23S rRNA + S-adenosyl-L-homocysteine + H(+). Its function is as follows. Catalyzes the formation of 5-methyl-uridine at position 747 (m5U747) in 23S rRNA. The polypeptide is 23S rRNA (uracil(747)-C(5))-methyltransferase RlmC (Haemophilus influenzae (strain ATCC 51907 / DSM 11121 / KW20 / Rd)).